Reading from the N-terminus, the 569-residue chain is MNYRIDRRTYAETYGPTVGDKVRLADTELFIEVEKDFTTYGDEVKFGGGKVIRDGMGQSPISREDGAVDLVITNALILDWWGIVKADVGIKDGKIYKIGKAGNPHIQDNVDIIIGPATEALAGEGMILTAGGIDAHIHFICPQQIETAIASGITTMIGGGTGPATGTNATTCTPGEWHIYRMLEAAEAFPMNLGFLGKGNSSQPEGLAEQVKAGVIGLKLHEDWGTTPAAIDTCLSVADKYDVQVAIHTDTLNEAGFVEATIAAFKNRVIHTYHTEGAGGGHAPDIIRVCGEMNVLPSSTNPTRPYTTNTLEEHLDMLMVCHHLDRSIPEDVAFAESRIRRETIAAEDILHDLGAFSIISSDSQAMGRVGEVIIRTWQTAHKMRVQRGRLTGETGENDNLRARRYIAKYTINPAITHGVSDYVGSIEVGKLADLVLWKPAFFGVKPEIVLKGGLIAWAQMGDANASIPTPQPVYMRPMFASFGGAIAKTSLTFVSKYAMKAGIPEKLKLKKTAVAVSNTRNISKASMKLNDALPRMEVNPETYEVRADGELLICEPATVLPMAQRYFLF.

Ni(2+) contacts are provided by H136, H138, and K219. K219 bears the N6-carboxylysine mark. H221 provides a ligand contact to substrate. Residues H248 and H274 each coordinate Ni(2+). The active-site Proton donor is H322. A Ni(2+)-binding site is contributed by D362.

Belongs to the metallo-dependent hydrolases superfamily. Urease alpha subunit family. In terms of assembly, heterotrimer of UreA (gamma), UreB (beta) and UreC (alpha) subunits. Three heterotrimers associate to form the active enzyme. Requires Ni cation as cofactor. Post-translationally, carboxylation allows a single lysine to coordinate two nickel ions.

It localises to the cytoplasm. It carries out the reaction urea + 2 H2O + H(+) = hydrogencarbonate + 2 NH4(+). Its pathway is nitrogen metabolism; urea degradation; CO(2) and NH(3) from urea (urease route): step 1/1. The polypeptide is Urease subunit alpha (Microcystis aeruginosa (strain NIES-843 / IAM M-2473)).